The sequence spans 488 residues: Malonate-semialdehyde dehydrogenase 1 (488 aa).

NAD(+)-binding residues include Phe-156, Lys-180, Glu-183, Arg-184, Ser-233, and Ser-255. The active-site Nucleophile is Cys-288. Glu-387 is an NAD(+) binding site.

Belongs to the aldehyde dehydrogenase family. IolA subfamily. In terms of assembly, homotetramer.

It carries out the reaction 3-oxopropanoate + NAD(+) + CoA + H2O = hydrogencarbonate + acetyl-CoA + NADH + H(+). It catalyses the reaction 2-methyl-3-oxopropanoate + NAD(+) + CoA + H2O = propanoyl-CoA + hydrogencarbonate + NADH + H(+). The protein operates within polyol metabolism; myo-inositol degradation into acetyl-CoA; acetyl-CoA from myo-inositol: step 7/7. Its function is as follows. Catalyzes the oxidation of malonate semialdehyde (MSA) and methylmalonate semialdehyde (MMSA) into acetyl-CoA and propanoyl-CoA, respectively. Is involved in a myo-inositol catabolic pathway. Bicarbonate, and not CO2, is the end-product of the enzymatic reaction. In Geobacillus kaustophilus (strain HTA426), this protein is Malonate-semialdehyde dehydrogenase 1.